Reading from the N-terminus, the 411-residue chain is MSEFLEGENSKRSIIREIFFDNVKLSYGCTEPVAVGLSVAVGKGYLRGVLKSIDVIMDRNTYKNGLEVGIPGTHLHGFDLAIALAYLVGKPEYGLQVFKDVNSHVLSKAYELKDKIRVSYENSYNLHIKTKLEADNEVLIEITDSHDNISKIVVDGNEIRNTQTSVNFKKDLVKSISLNDIFEYIENPDLDVVNVVKEGIKYNVNAAREGIKKEGNFGYALEEGIPAYVAAGVDERMNGELIPIMTVAGSGNQGIASIVPPTLYGRENEMPEEKIEKAVLLSILVTTYIKAFTGVLTPVCGAGSIASAGSSAAITYLAGGNAEQIKNAINNVLATLFGMTCDGAKRGCALKASIGTQMALNASKLALKDTNIPCGNGFAAKDVEETIRRIELLTKSLRQFDQDVIDFIGHC.

This sequence belongs to the UPF0597 family.

This chain is UPF0597 protein Fnod_1278, found in Fervidobacterium nodosum (strain ATCC 35602 / DSM 5306 / Rt17-B1).